The following is a 110-amino-acid chain: Large ribosomal subunit protein uL22 (110 aa).

This sequence belongs to the universal ribosomal protein uL22 family. Part of the 50S ribosomal subunit.

Its function is as follows. This protein binds specifically to 23S rRNA; its binding is stimulated by other ribosomal proteins, e.g. L4, L17, and L20. It is important during the early stages of 50S assembly. It makes multiple contacts with different domains of the 23S rRNA in the assembled 50S subunit and ribosome. The globular domain of the protein is located near the polypeptide exit tunnel on the outside of the subunit, while an extended beta-hairpin is found that lines the wall of the exit tunnel in the center of the 70S ribosome. The protein is Large ribosomal subunit protein uL22 of Shewanella denitrificans (strain OS217 / ATCC BAA-1090 / DSM 15013).